The sequence spans 363 residues: MPVLLDPENALALDVLLAGTDAQGLDWHLSAPDAADLPRIRGIGTLSSAGNEEISFLSNPRYQNQLATTRAAAVIVTPDVAQARQEQGASGHVLVVCKHPYLLYARLAQWFERASRPAGPAGVHPSAVVDPSAEIDADARVGAQCVIEAGARIGRGARLGPGCVIGAGSTVGADSLLHPRVTLYAGVHVGERAIIHSGAVLGADGFGFAPDPTLGRGAWGKIPQLGGVRVGNDVEIGANTTIDRGALDDTIVGDGVKLDNQIMVAHNVRIGAHTAIAACVGIAGSTTIGERCTIGGASMLSGHLAIADDVNISGGTAVTSNIAKAGRYTGVYPYAEHSEWQRNAAVIQQLALLRRRLRALERE.

His-266 acts as the Proton acceptor in catalysis.

Belongs to the transferase hexapeptide repeat family. LpxD subfamily. In terms of assembly, homotrimer.

It carries out the reaction a UDP-3-O-[(3R)-3-hydroxyacyl]-alpha-D-glucosamine + a (3R)-hydroxyacyl-[ACP] = a UDP-2-N,3-O-bis[(3R)-3-hydroxyacyl]-alpha-D-glucosamine + holo-[ACP] + H(+). It participates in bacterial outer membrane biogenesis; LPS lipid A biosynthesis. Catalyzes the N-acylation of UDP-3-O-acylglucosamine using 3-hydroxyacyl-ACP as the acyl donor. Is involved in the biosynthesis of lipid A, a phosphorylated glycolipid that anchors the lipopolysaccharide to the outer membrane of the cell. This chain is UDP-3-O-acylglucosamine N-acyltransferase, found in Bordetella parapertussis (strain 12822 / ATCC BAA-587 / NCTC 13253).